Consider the following 234-residue polypeptide: UPF0758 protein Rfer_3252 (234 aa).

An MPN domain is found at 112 to 234; sequence IFATPDAVKH…ALSMAERGLL (123 aa). The Zn(2+) site is built by H183, H185, and D196. The short motif at 183-196 is the JAMM motif element; the sequence is HNHPSGTVQPSRAD.

It belongs to the UPF0758 family.

The polypeptide is UPF0758 protein Rfer_3252 (Albidiferax ferrireducens (strain ATCC BAA-621 / DSM 15236 / T118) (Rhodoferax ferrireducens)).